A 405-amino-acid chain; its full sequence is Homocitrate synthase AksA (405 aa).

The Pyruvate carboxyltransferase domain occupies 23–274 (IEICDVTLRD…IERYDTTKLT (252 aa)).

The protein belongs to the alpha-IPM synthase/homocitrate synthase family.

The enzyme catalyses acetyl-CoA + 2-oxoglutarate + H2O = (2R)-homocitrate + CoA + H(+). It carries out the reaction 2-oxoadipate + acetyl-CoA + H2O = (R)-dihomocitrate + CoA + H(+). The catalysed reaction is 2-oxoheptanedioate + acetyl-CoA + H2O = (R)-trihomocitrate + CoA + H(+). It functions in the pathway organic acid metabolism; 2-oxosuberate biosynthesis. Catalyzes the condensation of alpha-ketoglutarate and acetyl-CoA to form (R)-homocitrate. Can also catalyze the condensation of alpha-ketoadipate with acetyl-CoA to form (R)-homo(2)citrate, and the condensation of alpha-ketopimelate with acetyl-CoA to form (R)-homo(3)citrate. These reactions are part of the biosynthesis pathway of coenzyme B and biotin. The protein is Homocitrate synthase AksA (aksA) of Methanosarcina acetivorans (strain ATCC 35395 / DSM 2834 / JCM 12185 / C2A).